A 312-amino-acid chain; its full sequence is Methionyl-tRNA formyltransferase (312 aa).

The interval 34–54 (PDAASGRRGKPQPSPVAREAA) is disordered. A (6S)-5,6,7,8-tetrahydrofolate-binding site is contributed by 110–113 (SLLP).

It belongs to the Fmt family.

The enzyme catalyses L-methionyl-tRNA(fMet) + (6R)-10-formyltetrahydrofolate = N-formyl-L-methionyl-tRNA(fMet) + (6S)-5,6,7,8-tetrahydrofolate + H(+). Functionally, attaches a formyl group to the free amino group of methionyl-tRNA(fMet). The formyl group appears to play a dual role in the initiator identity of N-formylmethionyl-tRNA by promoting its recognition by IF2 and preventing the misappropriation of this tRNA by the elongation apparatus. The polypeptide is Methionyl-tRNA formyltransferase (Mycobacterium tuberculosis (strain ATCC 25177 / H37Ra)).